A 224-amino-acid polypeptide reads, in one-letter code: MDKLLLWMFVFTSLLSEAFCQTDLKRKVFVFPRESETDHVKLIPHLEKPLQNFTLCFRTYSDLSRSQSLFSYSVKGRDNELLIYKEKVGEYSLYIGQSKVTVRGMEEYLSPVHLCTTWESSSGIVEFWVNGKPWVKKSLQREYTVKAPPSIVLGQEQDNYGGGFQRSQSFVGEFSDLYMWDYVLTPQDILFVYRDSPVNPNILNWQALNYEINGYVVIRPRVWD.

Residues 1–20 (MDKLLLWMFVFTSLLSEAFC) form the signal peptide. One can recognise a Pentraxin (PTX) domain in the interval 25 to 224 (KRKVFVFPRE…YVVIRPRVWD (200 aa)). Asn-52 carries an N-linked (GlcNAc...) asparagine glycan. An intrachain disulfide couples Cys-56 to Cys-115. The Ca(2+) site is built by Asp-78, Asn-79, Glu-156, Gln-157, Asp-158, and Gln-168.

This sequence belongs to the pentraxin family. In terms of assembly, homopentamer. Pentraxin (or pentaxin) have a discoid arrangement of 5 non-covalently bound subunits. The cofactor is Ca(2+).

The protein localises to the secreted. The polypeptide is Serum amyloid P-component (Apcs) (Mus musculus (Mouse)).